A 300-amino-acid polypeptide reads, in one-letter code: tRNA dimethylallyltransferase (300 aa).

ATP is bound at residue G9 to S16. Residue T11–S16 coordinates substrate. The interval D34–Q37 is interaction with substrate tRNA.

The protein belongs to the IPP transferase family. Monomer. It depends on Mg(2+) as a cofactor.

It carries out the reaction adenosine(37) in tRNA + dimethylallyl diphosphate = N(6)-dimethylallyladenosine(37) in tRNA + diphosphate. Functionally, catalyzes the transfer of a dimethylallyl group onto the adenine at position 37 in tRNAs that read codons beginning with uridine, leading to the formation of N6-(dimethylallyl)adenosine (i(6)A). The polypeptide is tRNA dimethylallyltransferase (Ehrlichia ruminantium (strain Welgevonden)).